A 236-amino-acid polypeptide reads, in one-letter code: Small ribosomal subunit protein eS6 (236 aa).

Residues Ser232 and Ser233 each carry the phosphoserine modification.

This sequence belongs to the eukaryotic ribosomal protein eS6 family. Phosphorylated.

The chain is Small ribosomal subunit protein eS6 (RPS6) from Eremothecium gossypii (strain ATCC 10895 / CBS 109.51 / FGSC 9923 / NRRL Y-1056) (Yeast).